A 310-amino-acid chain; its full sequence is Methionyl-tRNA formyltransferase (310 aa).

Ser-108–Pro-111 contributes to the (6S)-5,6,7,8-tetrahydrofolate binding site.

The protein belongs to the Fmt family.

The enzyme catalyses L-methionyl-tRNA(fMet) + (6R)-10-formyltetrahydrofolate = N-formyl-L-methionyl-tRNA(fMet) + (6S)-5,6,7,8-tetrahydrofolate + H(+). In terms of biological role, attaches a formyl group to the free amino group of methionyl-tRNA(fMet). The formyl group appears to play a dual role in the initiator identity of N-formylmethionyl-tRNA by promoting its recognition by IF2 and preventing the misappropriation of this tRNA by the elongation apparatus. The chain is Methionyl-tRNA formyltransferase from Fusobacterium nucleatum subsp. nucleatum (strain ATCC 25586 / DSM 15643 / BCRC 10681 / CIP 101130 / JCM 8532 / KCTC 2640 / LMG 13131 / VPI 4355).